The primary structure comprises 513 residues: Putative thymidine phosphorylase (513 aa).

The protein belongs to the thymidine/pyrimidine-nucleoside phosphorylase family. Type 2 subfamily.

It carries out the reaction thymidine + phosphate = 2-deoxy-alpha-D-ribose 1-phosphate + thymine. The chain is Putative thymidine phosphorylase from Rhodopseudomonas palustris (strain BisA53).